Consider the following 199-residue polypeptide: Imidazoleglycerol-phosphate dehydratase (199 aa).

The protein belongs to the imidazoleglycerol-phosphate dehydratase family.

The protein localises to the cytoplasm. The enzyme catalyses D-erythro-1-(imidazol-4-yl)glycerol 3-phosphate = 3-(imidazol-4-yl)-2-oxopropyl phosphate + H2O. It participates in amino-acid biosynthesis; L-histidine biosynthesis; L-histidine from 5-phospho-alpha-D-ribose 1-diphosphate: step 6/9. The protein is Imidazoleglycerol-phosphate dehydratase of Roseiflexus sp. (strain RS-1).